A 576-amino-acid chain; its full sequence is MRTTQFFLSTTKEAPSEAELVSHKLMLRAGLIKRLGSGLYTWMPLGLRVLRRVEAVVREEMNRAGAIELLMPAVQPAELWQETGRWAQFGPQMLKIKDRHEREFCFGPTHEEVITDLARREIKSYRQLPLNFYQIQTKFRDEIRPRFGVMRAREFLMKDAYSFHASRESLAATYQAMYDAYGRIFTRLGLRFRAVAADTGAIGGSASHEFHVLADSGEDLIAYCPDSDYAANVELAEALAPAAARGAPQEAMREVETPKQTTCEDVAALLGIPLARTVKLIAVMAGERMVVVLLRGDHMLNEVKLAKIEGLADFRLANEAEIRAVFDCPPGFLGPVGIDRSTIRVIADRAVAVMSDFVCGANKPKFHLAGVNFGRDLQEPDLVADIRNVVAGDPSPDGKGTLALCRGIEVGHVFQLGNKYSQAMNATYLDEAGKAQAMEMGCYGIGVSRIVAAAVEQNHDGKGIVWPASMAPFSVVIVAIGYGKSASVKNAADTLYADLMAVGVEVLLDDRDERPGVMFADAELVGIPHRVTLGERGLNEGVVEYQPRRAAPEQGADARKIAVAEAKAFLMGVLGD.

Belongs to the class-II aminoacyl-tRNA synthetase family. ProS type 1 subfamily. Homodimer.

The protein localises to the cytoplasm. The enzyme catalyses tRNA(Pro) + L-proline + ATP = L-prolyl-tRNA(Pro) + AMP + diphosphate. Its function is as follows. Catalyzes the attachment of proline to tRNA(Pro) in a two-step reaction: proline is first activated by ATP to form Pro-AMP and then transferred to the acceptor end of tRNA(Pro). As ProRS can inadvertently accommodate and process non-cognate amino acids such as alanine and cysteine, to avoid such errors it has two additional distinct editing activities against alanine. One activity is designated as 'pretransfer' editing and involves the tRNA(Pro)-independent hydrolysis of activated Ala-AMP. The other activity is designated 'posttransfer' editing and involves deacylation of mischarged Ala-tRNA(Pro). The misacylated Cys-tRNA(Pro) is not edited by ProRS. This Thiobacillus denitrificans (strain ATCC 25259 / T1) protein is Proline--tRNA ligase.